The following is a 157-amino-acid chain: Tuberoinfundibular peptide of 39 residues (157 aa).

The first 25 residues, 1-25 (MALSLPPRPALLFLVLMSVTLMASA), serve as a signal peptide directing secretion. The propeptide occupies 26-116 (FPQPQLRPLQ…DWPSRVGHQQ (91 aa)).

Belongs to the parathyroid hormone family.

The protein localises to the secreted. Its function is as follows. Plays a role as a potent and selective agonist of pth2r resulting in adenyl cyclase activation and intracellular calcium level elevation. This Danio rerio (Zebrafish) protein is Tuberoinfundibular peptide of 39 residues.